The following is a 226-amino-acid chain: Urease accessory protein UreF (226 aa).

Belongs to the UreF family. As to quaternary structure, ureD, UreF and UreG form a complex that acts as a GTP-hydrolysis-dependent molecular chaperone, activating the urease apoprotein by helping to assemble the nickel containing metallocenter of UreC. The UreE protein probably delivers the nickel.

It localises to the cytoplasm. In terms of biological role, required for maturation of urease via the functional incorporation of the urease nickel metallocenter. This Janthinobacterium sp. (strain Marseille) (Minibacterium massiliensis) protein is Urease accessory protein UreF.